Consider the following 232-residue polypeptide: Chaperone protein CssC (232 aa).

The first 20 residues, 1-20 (MKSKLIILLTLVPFSSFSTG), serve as a signal peptide directing secretion.

The protein belongs to the periplasmic pilus chaperone family.

It is found in the periplasm. Its function is as follows. Involved in the biogenesis of the CS6 fimbria. This chain is Chaperone protein CssC (cssC), found in Escherichia coli.